The primary structure comprises 174 residues: NADH-ubiquinone oxidoreductase chain 6 (174 aa).

A run of 4 helical transmembrane segments spans residues 25 to 45 (SMGL…GIYV), 48 to 68 (FWFS…LFIY), 82 to 102 (FKLT…FFIL), and 143 to 163 (LITL…VKIT).

It belongs to the complex I subunit 6 family.

The protein resides in the mitochondrion membrane. It carries out the reaction a ubiquinone + NADH + 5 H(+)(in) = a ubiquinol + NAD(+) + 4 H(+)(out). In terms of biological role, core subunit of the mitochondrial membrane respiratory chain NADH dehydrogenase (Complex I) that is believed to belong to the minimal assembly required for catalysis. Complex I functions in the transfer of electrons from NADH to the respiratory chain. The immediate electron acceptor for the enzyme is believed to be ubiquinone. This chain is NADH-ubiquinone oxidoreductase chain 6 (mt:ND6), found in Anopheles gambiae (African malaria mosquito).